The following is a 423-amino-acid chain: D-tagatose-1,6-bisphosphate aldolase subunit GatZ (423 aa).

Belongs to the GatZ/KbaZ family. GatZ subfamily. Forms a complex with GatY.

Its pathway is carbohydrate metabolism; D-tagatose 6-phosphate degradation; D-glyceraldehyde 3-phosphate and glycerone phosphate from D-tagatose 6-phosphate: step 2/2. In terms of biological role, component of the tagatose-1,6-bisphosphate aldolase GatYZ that is required for full activity and stability of the Y subunit. Could have a chaperone-like function for the proper and stable folding of GatY. When expressed alone, GatZ does not show any aldolase activity. Is involved in the catabolism of galactitol. This chain is D-tagatose-1,6-bisphosphate aldolase subunit GatZ, found in Salmonella newport (strain SL254).